The primary structure comprises 341 residues: Heme A synthase (341 aa).

Helical transmembrane passes span 7 to 27 (VTVW…IGGI), 92 to 112 (LFGR…AITK), 118 to 138 (MVAK…MGWF), 159 to 179 (LFLT…CAGV), 190 to 210 (FFTA…GALV), 253 to 273 (FLHR…PFWL), 280 to 300 (LFLA…VSVV), and 302 to 322 (IFLA…GVHM). Residue histidine 255 coordinates heme. Histidine 308 contributes to the heme binding site.

It belongs to the COX15/CtaA family. Type 2 subfamily. Interacts with CtaB. The cofactor is heme b.

The protein resides in the cell membrane. It catalyses the reaction Fe(II)-heme o + 2 A + H2O = Fe(II)-heme a + 2 AH2. Its pathway is porphyrin-containing compound metabolism; heme A biosynthesis; heme A from heme O: step 1/1. In terms of biological role, catalyzes the conversion of heme O to heme A by two successive hydroxylations of the methyl group at C8. The first hydroxylation forms heme I, the second hydroxylation results in an unstable dihydroxymethyl group, which spontaneously dehydrates, resulting in the formyl group of heme A. The sequence is that of Heme A synthase from Anaplasma marginale (strain Florida).